We begin with the raw amino-acid sequence, 82 residues long: MQKQSNINSVELSRKSEELIKASSNRYRAVVQVANRAKRRRYEDFDNFDEQAVKPVIRAVLEMSDELMQPEIISEVGNNIDR.

It belongs to the RNA polymerase subunit omega family. As to quaternary structure, in cyanobacteria the RNAP catalytic core is composed of 2 alpha, 1 beta, 1 beta', 1 gamma and 1 omega subunit. When a sigma factor is associated with the core the holoenzyme is formed, which can initiate transcription.

It carries out the reaction RNA(n) + a ribonucleoside 5'-triphosphate = RNA(n+1) + diphosphate. Its function is as follows. Promotes RNA polymerase assembly. Latches the N- and C-terminal regions of the beta' subunit thereby facilitating its interaction with the beta and alpha subunits. In Trichodesmium erythraeum (strain IMS101), this protein is DNA-directed RNA polymerase subunit omega.